The following is a 256-amino-acid chain: Astacin-like metalloprotease toxin 2 (256 aa).

A signal peptide spans 1-24 (MIPDVGFLVLLTGALFICIKAAPA). Positions 25–52 (TTDVDPTFEGRIVMEGDILIREEQLTER) are excised as a propeptide. Positions 53 to 250 (NAIALENMRW…KKINTLYNCP (198 aa)) constitute a Peptidase M12A domain. 2 disulfide bridges follow: Cys94–Cys249 and Cys117–Cys136. His144 lines the Zn(2+) pocket. The active site involves Glu145. 2 residues coordinate Zn(2+): His148 and His154.

In terms of assembly, monomer. Requires Zn(2+) as cofactor. Expressed by the venom gland.

It is found in the secreted. Its activity is regulated as follows. Inhibited by 1,10-phenanthroline. In terms of biological role, zinc metalloprotease. Provoques deadhesion of endothelial cells from cell cultures, and also degradation of fibronectin, fibrinogen and gelatin in vitro. Its role in the venom is not fully understood but it might act as a spreading factor that facilitates diffusion of other venom toxins. Alternatively, it might be involved in the proteolytic processing of other venom toxins or it might play a role in extra-oral digestion of prey. The polypeptide is Astacin-like metalloprotease toxin 2 (Loxosceles intermedia (Brown spider)).